Here is a 617-residue protein sequence, read N- to C-terminus: Electron transfer flavoprotein-ubiquinone oxidoreductase, mitochondrial (617 aa).

A mitochondrion-targeting transit peptide spans 1-33; that stretch reads MMVPLAKLASPAYQCFHALKIKKNYLPLCATRW. 75-80 is a binding site for FAD; that stretch reads GAGPAG. The residue at position 96 (Lys-96) is an N6-acetyllysine. The stretch at 109-130 is an intramembrane region; sequence IGAHTLSGACLDPRAFEELFPD. Residues Lys-132 and Lys-223 each carry the N6-acetyllysine modification. Gly-305 and Gly-306 together coordinate a ubiquinone. Lys-357 is subject to N6-acetyllysine. The stretch at 428–447 is an intramembrane region; that stretch reads IGLHVTEYEDNLKNSWVWKE. Ser-551 carries the phosphoserine modification. Residues Cys-561, Cys-586, Cys-589, and Cys-592 each contribute to the [4Fe-4S] cluster site. The 30-residue stretch at 577 to 606 folds into the 4Fe-4S ferredoxin-type domain; the sequence is FRLQINAQNCVHCKTCDIKDPSQNINWVVP.

In terms of assembly, monomer. The cofactor is [4Fe-4S] cluster. FAD serves as cofactor.

The protein localises to the mitochondrion inner membrane. It carries out the reaction a ubiquinone + reduced [electron-transfer flavoprotein] = a ubiquinol + oxidized [electron-transfer flavoprotein] + H(+). Accepts electrons from ETF and reduces ubiquinone. The protein is Electron transfer flavoprotein-ubiquinone oxidoreductase, mitochondrial (ETFDH) of Sus scrofa (Pig).